Here is a 162-residue protein sequence, read N- to C-terminus: Phosphopantetheine adenylyltransferase (162 aa).

Substrate is bound at residue S9. Residues S9–F10 and H17 contribute to the ATP site. Positions 41, 73, and 87 each coordinate substrate. Residues G88–R90, E98, and C123–S129 each bind ATP.

This sequence belongs to the bacterial CoaD family. In terms of assembly, homohexamer. Mg(2+) serves as cofactor.

Its subcellular location is the cytoplasm. The enzyme catalyses (R)-4'-phosphopantetheine + ATP + H(+) = 3'-dephospho-CoA + diphosphate. It functions in the pathway cofactor biosynthesis; coenzyme A biosynthesis; CoA from (R)-pantothenate: step 4/5. Functionally, reversibly transfers an adenylyl group from ATP to 4'-phosphopantetheine, yielding dephospho-CoA (dPCoA) and pyrophosphate. The protein is Phosphopantetheine adenylyltransferase of Natranaerobius thermophilus (strain ATCC BAA-1301 / DSM 18059 / JW/NM-WN-LF).